The sequence spans 192 residues: Lumican (192 aa).

LRR repeat units follow at residues L1 to K23, Q26 to K46, S47 to L68, N69 to K90, S94 to A114, S115 to R136, G139 to I162, S164 to L185, and E186 to V192.

The protein belongs to the small leucine-rich proteoglycan (SLRP) family. SLRP class II subfamily. In terms of assembly, binds to laminin. Post-translationally, sulfated on tyrosine residue(s). In terms of processing, contains keratan sulfate.

The protein localises to the secreted. It localises to the extracellular space. It is found in the extracellular matrix. The chain is Lumican (LUM) from Oryctolagus cuniculus (Rabbit).